The sequence spans 160 residues: 6,7-dimethyl-8-ribityllumazine synthase (160 aa).

5-amino-6-(D-ribitylamino)uracil-binding positions include tryptophan 28, 59–61, and 82–84; these read SFE and VII. 87 to 88 serves as a coordination point for (2S)-2-hydroxy-3-oxobutyl phosphate; the sequence is GT. Residue histidine 90 is the Proton donor of the active site. Phenylalanine 115 contributes to the 5-amino-6-(D-ribitylamino)uracil binding site. Arginine 129 contacts (2S)-2-hydroxy-3-oxobutyl phosphate.

Belongs to the DMRL synthase family.

It carries out the reaction (2S)-2-hydroxy-3-oxobutyl phosphate + 5-amino-6-(D-ribitylamino)uracil = 6,7-dimethyl-8-(1-D-ribityl)lumazine + phosphate + 2 H2O + H(+). Its pathway is cofactor biosynthesis; riboflavin biosynthesis; riboflavin from 2-hydroxy-3-oxobutyl phosphate and 5-amino-6-(D-ribitylamino)uracil: step 1/2. Catalyzes the formation of 6,7-dimethyl-8-ribityllumazine by condensation of 5-amino-6-(D-ribitylamino)uracil with 3,4-dihydroxy-2-butanone 4-phosphate. This is the penultimate step in the biosynthesis of riboflavin. The polypeptide is 6,7-dimethyl-8-ribityllumazine synthase (Clavibacter michiganensis subsp. michiganensis (strain NCPPB 382)).